The sequence spans 329 residues: Quinone oxidoreductase (329 aa).

The residue at position 2 (A2) is an N-acetylalanine. An N6-acetyllysine modification is found at K23. Residues Y53, 158-161 (SGGV), G181, H200, N229, 246-249 (VGSR), and 269-271 (VTV) each bind NADP(+). A Phosphoserine modification is found at S248. The residue at position 296 (K296) is an N6-succinyllysine.

This sequence belongs to the zinc-containing alcohol dehydrogenase family. Quinone oxidoreductase subfamily. As to quaternary structure, homotetramer.

It is found in the cytoplasm. The catalysed reaction is 2 a quinone + NADPH + H(+) = 2 a 1,4-benzosemiquinone + NADP(+). Does not have alcohol dehydrogenase activity. Binds NADP and acts through a one-electron transfer process. Orthoquinones, such as 1,2-naphthoquinone or 9,10-phenanthrenequinone, are the best substrates (in vitro). May act in the detoxification of xenobiotics. Interacts with (AU)-rich elements (ARE) in the 3'-UTR of target mRNA species and enhances their stability. NADPH binding interferes with mRNA binding. This chain is Quinone oxidoreductase (CRYZ), found in Pongo abelii (Sumatran orangutan).